Reading from the N-terminus, the 316-residue chain is tRNA dimethylallyltransferase (316 aa).

Residue 13 to 20 (GPTASGKT) coordinates ATP. 15-20 (TASGKT) serves as a coordination point for substrate. Interaction with substrate tRNA regions lie at residues 38 to 41 (DSAL), 162 to 166 (QRINR), 243 to 248 (RCVGYR), and 276 to 283 (KRQITWLR).

It belongs to the IPP transferase family. Monomer. Mg(2+) serves as cofactor.

The enzyme catalyses adenosine(37) in tRNA + dimethylallyl diphosphate = N(6)-dimethylallyladenosine(37) in tRNA + diphosphate. In terms of biological role, catalyzes the transfer of a dimethylallyl group onto the adenine at position 37 in tRNAs that read codons beginning with uridine, leading to the formation of N6-(dimethylallyl)adenosine (i(6)A). This Pasteurella multocida (strain Pm70) protein is tRNA dimethylallyltransferase.